Consider the following 87-residue polypeptide: MAHHKSAIKRIKQNAKKNARNRHISSTLKTYIKRVREAVEAKDKEAATVALKAAIPVIDKTATKGVIHSSNASRTVSRLTKLVNTLG.

The segment at 1-22 (MAHHKSAIKRIKQNAKKNARNR) is disordered.

It belongs to the bacterial ribosomal protein bS20 family.

Its function is as follows. Binds directly to 16S ribosomal RNA. The chain is Small ribosomal subunit protein bS20 from Pelobacter propionicus (strain DSM 2379 / NBRC 103807 / OttBd1).